Here is a 367-residue protein sequence, read N- to C-terminus: Flagellar P-ring protein (367 aa).

Residues M1–A24 form the signal peptide.

The protein belongs to the FlgI family. As to quaternary structure, the basal body constitutes a major portion of the flagellar organelle and consists of four rings (L,P,S, and M) mounted on a central rod.

The protein resides in the periplasm. It localises to the bacterial flagellum basal body. Functionally, assembles around the rod to form the L-ring and probably protects the motor/basal body from shearing forces during rotation. In Syntrophotalea carbinolica (strain DSM 2380 / NBRC 103641 / GraBd1) (Pelobacter carbinolicus), this protein is Flagellar P-ring protein.